The sequence spans 155 residues: MADLSSLKDLGTSSEAAAPAHVRKVDSLGRSYATGKRKDAVARVWVKAGSGKIIVNGKDFTAYFARPVLQMILRQPIVAAARDGQFDIIATVAGGGLSGQAGAVRHGLSKALTYFEPGLRSVLKKGGFLTRDSRVVERKKYGKAKARRSFQFSKR.

This sequence belongs to the universal ribosomal protein uS9 family.

The protein is Small ribosomal subunit protein uS9 of Rhizobium etli (strain ATCC 51251 / DSM 11541 / JCM 21823 / NBRC 15573 / CFN 42).